The sequence spans 99 residues: Defensin-A4 (99 aa).

An N-terminal signal peptide occupies residues 1–21 (MKTLCLLFAVLCLVTWTQARG). Residues 22-68 (AEVEENLTAQDGEVDIAGDNGDVQLTLNTDDFESFTLKTLTLGHPRV) constitute a propeptide that is removed on maturation. 3 disulfide bridges follow: cysteine 73–cysteine 97, cysteine 75–cysteine 89, and cysteine 79–cysteine 96.

Belongs to the alpha-defensin family. Lowly expressed in spleen, and expressed at lower levels in kidney and lung.

The protein localises to the secreted. Functionally, has antimicrobial activity. This chain is Defensin-A4, found in Ornithorhynchus anatinus (Duckbill platypus).